The following is an 841-amino-acid chain: SLIT and NTRK-like protein 6 (841 aa).

The signal sequence occupies residues 1 to 26 (MKLWIHLFYSSLLACISLHSQTPVLS). Residues 27–67 (SRGSCDSLCNCEEKDGTMLINCEAKGIKMVSEISVPPSRPF) enclose the LRRNT 1 domain. The Extracellular segment spans residues 27–608 (SRGSCDSLCN…RSLTDAVPLS (582 aa)). 5 LRR repeats span residues 89 to 110 (NAIS…AFNG), 113 to 134 (LLKQ…TFHG), 137 to 158 (NLEF…AFSK), 161 to 182 (RLKV…IFRF), and 184 to 205 (PLTH…GFLE). Residues 218 to 269 (NKWACNCDLLQLKTWLENMPPQSIIGDVVCNSPPFFKGSILSRLKKESICPT) enclose the LRRCT 1 domain. An LRRNT 2 domain is found at 320–361 (PSTQLPGPYCPIPCNCKVLSPSGLLIHCQERNIESLSDLRPP). LRR repeat units follow at residues 364-385 (NPRK…DLVE), 388-409 (TLEM…SFMN), 412-433 (RLQK…MFLG), 436-457 (NLEY…TFNP), 460-481 (KLKV…IFSG), and 483-504 (PLTK…NILD). Residues 517 to 568 (NPWDCSCDLVGLQQWIQKLSKNTVTDDILCTSPGHLDKKELKALNSEILCPG) form the LRRCT 2 domain. Residues 609–629 (VLILGLLIMFITIVFCAAGIV) form a helical membrane-spanning segment. The Cytoplasmic segment spans residues 630-841 (VLVLHRRRRY…DYLEVLEQQT (212 aa)).

The protein belongs to the SLITRK family. In terms of tissue distribution, in adult brain, highly expressed in putamen with no expression in cerebral cortex. Expressed in adult and fetal lung and fetal liver. Also expressed at high levels in some brain tumors including medulloblastomas and primitive neuroectodermal tumors.

The protein localises to the cell membrane. Functionally, regulator of neurite outgrowth required for normal hearing and vision. This chain is SLIT and NTRK-like protein 6 (SLITRK6), found in Homo sapiens (Human).